Here is a 337-residue protein sequence, read N- to C-terminus: Anthranilate phosphoribosyltransferase (337 aa).

Residues Gly81, 84 to 85 (GD), Ser89, 91 to 94 (NVST), 109 to 117 (KHGNRALSS), and Ala121 each bind 5-phospho-alpha-D-ribose 1-diphosphate. An anthranilate-binding site is contributed by Gly81. A Mg(2+)-binding site is contributed by Ser93. Position 112 (Asn112) interacts with anthranilate. Arg167 contacts anthranilate. Mg(2+)-binding residues include Asp226 and Glu227.

This sequence belongs to the anthranilate phosphoribosyltransferase family. Homodimer. The cofactor is Mg(2+).

It catalyses the reaction N-(5-phospho-beta-D-ribosyl)anthranilate + diphosphate = 5-phospho-alpha-D-ribose 1-diphosphate + anthranilate. It functions in the pathway amino-acid biosynthesis; L-tryptophan biosynthesis; L-tryptophan from chorismate: step 2/5. In terms of biological role, catalyzes the transfer of the phosphoribosyl group of 5-phosphorylribose-1-pyrophosphate (PRPP) to anthranilate to yield N-(5'-phosphoribosyl)-anthranilate (PRA). The polypeptide is Anthranilate phosphoribosyltransferase (Bradyrhizobium diazoefficiens (strain JCM 10833 / BCRC 13528 / IAM 13628 / NBRC 14792 / USDA 110)).